A 192-amino-acid polypeptide reads, in one-letter code: Ion-translocating oxidoreductase complex subunit B (192 aa).

The hydrophobic stretch occupies residues 1–26 (MNAIWIAVAAVSLLALAFGAILGYAS). One can recognise a 4Fe-4S domain in the interval 32–91 (EDDPVVEKIDEILPQSQCGQCGYPGCRPYAEAISCNGEKINRCAPGGEAVMLKIAELLNV). [4Fe-4S] cluster-binding residues include C49, C52, C57, C74, C117, C120, C123, C127, C147, C150, C153, and C157. 4Fe-4S ferredoxin-type domains lie at 108-137 (MVAV…GATR) and 138-167 (AMHT…LQPV).

The protein belongs to the 4Fe4S bacterial-type ferredoxin family. RnfB subfamily. In terms of assembly, the complex is composed of six subunits: RsxA, RsxB, RsxC, RsxD, RsxE and RsxG. It depends on [4Fe-4S] cluster as a cofactor.

It is found in the cell inner membrane. In terms of biological role, part of a membrane-bound complex that couples electron transfer with translocation of ions across the membrane. Required to maintain the reduced state of SoxR. The polypeptide is Ion-translocating oxidoreductase complex subunit B (Escherichia coli O81 (strain ED1a)).